Consider the following 32-residue polypeptide: Photosystem I reaction center subunit XII (32 aa).

Residues 10-27 form a helical membrane-spanning segment; sequence VVALVSAFVTGILALRLG.

This sequence belongs to the PsaM family.

Its subcellular location is the plastid. The protein resides in the chloroplast thylakoid membrane. This is Photosystem I reaction center subunit XII from Staurastrum punctulatum (Green alga).